Consider the following 1692-residue polypeptide: Adenylate cyclase (1692 aa).

Disordered stretches follow at residues 1–22 (MDQS…FKTG) and 103–142 (SLSD…YKEN). The segment covering 120–132 (ESSEKSEVPRDTR) has biased composition (basic and acidic residues). The required for interaction with gpa2 stretch occupies residues 174–195 (FTNLTFPEPISDDSDSVEFQRD). The Ras-associating domain maps to 292–380 (KEFFLRVYRD…SDEEINEEDN (89 aa)). LRR repeat units lie at residues 430–450 (ELIS…DFME), 454–474 (KLKR…PITA), 477–498 (QLEV…IFSG), 503–524 (SLKE…TRYL), 526–547 (NLTY…ITEL), 549–570 (QLET…IGSL), 572–594 (KLKH…IGLL), 596–617 (NLET…SECP), 618–639 (KLNS…NPSA), 660–681 (NLVY…VIET), 684–705 (NVET…ISAM), 707–729 (NLKY…GKLK), 730–751 (HLVH…VWQV), 753–774 (SLKV…VATS), 783–805 (QLKI…EFVM), 807–827 (TVEE…TALE), 831–852 (CLKV…FFQN), 855–876 (DLKH…STAQ), 878–899 (LLET…EALS), 901–922 (SLRF…KAEK), and 930–951 (QLEY…EDTN). One can recognise a PPM-type phosphatase domain in the interval 995 to 1275 (RYGVCGYLSR…KNVLVVIVEL (281 aa)). In terms of domain architecture, Guanylate cyclase spans 1332–1469 (AMVFTDIKNS…PVVNRTSRVV (138 aa)). Residues D1337 and D1380 each coordinate Mg(2+). D1337 and D1380 together coordinate Mn(2+). A compositionally biased stretch (basic and acidic residues) spans 1585 to 1597 (SDSKSVHGEEGGS). The segment at 1585–1614 (SDSKSVHGEEGGSGKRSVSSLRNVSPSEST) is disordered. Positions 1600–1614 (RSVSSLRNVSPSEST) are enriched in polar residues.

This sequence belongs to the adenylyl cyclase class-3 family. Interacts (via N-terminus) with gpa2; the interaction is direct and serves to activate adenylate cyclase and cAMP-PKA signaling, to repress sexual development and gluconeogenesis. Interacts with git1. Requires Mn(2+) as cofactor.

It is found in the cytoplasm. The enzyme catalyses ATP = 3',5'-cyclic AMP + diphosphate. Activated by binding G protein gpa2. Activated by git1. In contrast to yeast cyclase, S.pombe cyclase is not likely to be regulated by RAS proteins. In terms of biological role, acts in glucose-induced cAMP signaling by catalyzing the synthesis of the second messenger, cAMP to activate PKA signaling and repress sexual development and gluconeogenesis. This is Adenylate cyclase from Schizosaccharomyces pombe (strain 972 / ATCC 24843) (Fission yeast).